The sequence spans 397 residues: Dual specificity mitogen-activated protein kinase kinase 4 (397 aa).

Residues 1-38 (MAAPSPSGGGGSGGGGGTPGPIGPPASGHPAVSSMQGK) are disordered. The residue at position 2 (Ala2) is an N-acetylalanine. Positions 7 to 20 (SGGGGSGGGGGTPG) are enriched in gly residues. The d domain stretch occupies residues 35–50 (MQGKRKALKLNFANPP). Asymmetric dimethylarginine; alternate is present on Arg56. Arg56 is subject to Omega-N-methylarginine; alternate. Ser88 carries the post-translational modification Phosphoserine. In terms of domain architecture, Protein kinase spans 100–366 (LKDLGEIGRG…KELLKHPFIL (267 aa)). ATP-binding positions include 106–114 (IGRGAYGSV) and Lys129. Asp227 serves as the catalytic Proton acceptor. Ser255 carries the phosphoserine modification. Thr259 bears the Phosphothreonine mark. The tract at residues 362–385 (HPFILMYEERTVEVACYVCKILDQ) is DVD domain.

The protein belongs to the protein kinase superfamily. STE Ser/Thr protein kinase family. MAP kinase kinase subfamily. In terms of assembly, interacts with SPAG9. Interacts (via its D domain) with its substrates MAPK8/JNK1, MAPK9/JNK2, MAPK10/JNK3, MAPK11 and MAPK14. Interacts (via its DVD domain) with MAP3Ks activators like MAP3K1/MEKK1 and MAP3K11/MLK3. Interacts with ARRB1, ARRB2 and MAPK8IP3/JIP3. Activated by phosphorylation on Ser-255 and Thr-259 by MAP kinase kinase kinases (MAP3Ks). As to expression, strong expression is detected in most of the central nervous system and in liver and thymus during early stages of development. While expression in nervous system increases over time, expression in fetal liver and thymus gradually decreases as embryogenesis proceeds. High level of expression in the central nervous system persists throughout postnatal development and remained at a stable level in adult brain.

It localises to the cytoplasm. The protein resides in the nucleus. It carries out the reaction L-seryl-[protein] + ATP = O-phospho-L-seryl-[protein] + ADP + H(+). The catalysed reaction is L-threonyl-[protein] + ATP = O-phospho-L-threonyl-[protein] + ADP + H(+). It catalyses the reaction L-tyrosyl-[protein] + ATP = O-phospho-L-tyrosyl-[protein] + ADP + H(+). With respect to regulation, activated in response to a variety of cellular stresses, including UV and gamma-irradiation, heat shock, hyperosmolarity, T-cell receptor stimulation, peroxide and inflammatory cytokines. Also activated by developmental cues. MAP2K4/MKK4 is activated by the majority of MKKKs, such as MAP3K5/ASK1, MAP3K1/MEKK1, MAP3K7/TAK1, MAP3K10/MLK2, MAP3K11/MLK3, MAP3K12/DLK and MAP3K13/LZK. Dual specificity protein kinase which acts as an essential component of the MAP kinase signal transduction pathway. Essential component of the stress-activated protein kinase/c-Jun N-terminal kinase (SAP/JNK) signaling pathway. With MAP2K7/MKK7, is the one of the only known kinase to directly activate the stress-activated protein kinase/c-Jun N-terminal kinases MAPK8/JNK1, MAPK9/JNK2 and MAPK10/JNK3. MAP2K4/MKK4 and MAP2K7/MKK7 both activate the JNKs by phosphorylation, but they differ in their preference for the phosphorylation site in the Thr-Pro-Tyr motif. MAP2K4 shows preference for phosphorylation of the Tyr residue and MAP2K7/MKK7 for the Thr residue. The phosphorylation of the Thr residue by MAP2K7/MKK7 seems to be the prerequisite for JNK activation at least in response to pro-inflammatory cytokines, while other stimuli activate both MAP2K4/MKK4 and MAP2K7/MKK7 which synergistically phosphorylate JNKs. MAP2K4 is required for maintaining peripheral lymphoid homeostasis. The MKK/JNK signaling pathway is also involved in mitochondrial death signaling pathway, including the release cytochrome c, leading to apoptosis. Whereas MAP2K7/MKK7 exclusively activates JNKs, MAP2K4/MKK4 additionally activates the p38 MAPKs MAPK11, MAPK12, MAPK13 and MAPK14. The protein is Dual specificity mitogen-activated protein kinase kinase 4 (Map2k4) of Mus musculus (Mouse).